Reading from the N-terminus, the 227-residue chain is Large ribosomal subunit protein uL3 (227 aa).

It belongs to the universal ribosomal protein uL3 family. In terms of assembly, part of the 50S ribosomal subunit. Forms a cluster with proteins L14 and L19.

In terms of biological role, one of the primary rRNA binding proteins, it binds directly near the 3'-end of the 23S rRNA, where it nucleates assembly of the 50S subunit. The polypeptide is Large ribosomal subunit protein uL3 (Persephonella marina (strain DSM 14350 / EX-H1)).